A 32-amino-acid polypeptide reads, in one-letter code: Cytochrome b6-f complex subunit 7 (32 aa).

A helical transmembrane segment spans residues 9–27 (AAVFWVLIPVGLLGGAILL).

The protein belongs to the PetM family. The 4 large subunits of the cytochrome b6-f complex are cytochrome b6, subunit IV (17 kDa polypeptide, PetD), cytochrome f and the Rieske protein, while the 4 small subunits are PetG, PetL, PetM and PetN. The complex functions as a dimer.

The protein localises to the cellular thylakoid membrane. Its function is as follows. Component of the cytochrome b6-f complex, which mediates electron transfer between photosystem II (PSII) and photosystem I (PSI), cyclic electron flow around PSI, and state transitions. The sequence is that of Cytochrome b6-f complex subunit 7 from Prochlorococcus marinus (strain MIT 9211).